A 466-amino-acid polypeptide reads, in one-letter code: 3-isopropylmalate dehydratase large subunit (466 aa).

The [4Fe-4S] cluster site is built by C347, C407, and C410.

The protein belongs to the aconitase/IPM isomerase family. LeuC type 1 subfamily. In terms of assembly, heterodimer of LeuC and LeuD. It depends on [4Fe-4S] cluster as a cofactor.

The enzyme catalyses (2R,3S)-3-isopropylmalate = (2S)-2-isopropylmalate. Its pathway is amino-acid biosynthesis; L-leucine biosynthesis; L-leucine from 3-methyl-2-oxobutanoate: step 2/4. In terms of biological role, catalyzes the isomerization between 2-isopropylmalate and 3-isopropylmalate, via the formation of 2-isopropylmaleate. In Escherichia fergusonii (strain ATCC 35469 / DSM 13698 / CCUG 18766 / IAM 14443 / JCM 21226 / LMG 7866 / NBRC 102419 / NCTC 12128 / CDC 0568-73), this protein is 3-isopropylmalate dehydratase large subunit.